Here is a 292-residue protein sequence, read N- to C-terminus: Tetratricopeptide repeat protein 1 (292 aa).

A disordered region spans residues Thr-23–Glu-125. Composition is skewed to basic and acidic residues over residues Leu-45–Glu-55 and Gly-75–Glu-85. A phosphoserine mark is found at Ser-83 and Ser-90. Basic and acidic residues predominate over residues Glu-99 to Glu-125. TPR repeat units lie at residues Ser-116–Cys-149, Ser-155–Tyr-188, and Ile-189–Ile-222.

Interacts with the GAP domain of NF1. Interacts (via TPR repeats) with HSP90AA1 and HSPA8.

The polypeptide is Tetratricopeptide repeat protein 1 (TTC1) (Homo sapiens (Human)).